The chain runs to 244 residues: Phosphonates import ATP-binding protein PhnC 2 (244 aa).

An ABC transporter domain is found at 3–242 (LRVEGLKKVY…ELTDYTVDQL (240 aa)). Residue 36-43 (GPSGAGKS) participates in ATP binding.

The protein belongs to the ABC transporter superfamily. Phosphonates importer (TC 3.A.1.9.1) family. The complex is composed of two ATP-binding proteins (PhnC), two transmembrane proteins (PhnE) and a solute-binding protein (PhnD).

The protein localises to the cell membrane. It carries out the reaction phosphonate(out) + ATP + H2O = phosphonate(in) + ADP + phosphate + H(+). Its function is as follows. Part of the ABC transporter complex PhnCDE involved in phosphonates import. Responsible for energy coupling to the transport system. This is Phosphonates import ATP-binding protein PhnC 2 from Halalkalibacterium halodurans (strain ATCC BAA-125 / DSM 18197 / FERM 7344 / JCM 9153 / C-125) (Bacillus halodurans).